Consider the following 157-residue polypeptide: UPF0262 protein RHE_CH00582 (157 aa).

Belongs to the UPF0262 family.

This Rhizobium etli (strain ATCC 51251 / DSM 11541 / JCM 21823 / NBRC 15573 / CFN 42) protein is UPF0262 protein RHE_CH00582.